The chain runs to 369 residues: Proton-coupled zinc antiporter SLC30A8 (369 aa).

At 1 to 79 the chain is on the cytoplasmic side; the sequence is MEFLERTYLV…AKWKLCSASA (79 aa). Positions 31–52 are disordered; sequence PVNKDQCPRERPEELESGGMYH. Residues 32-44 show a composition bias toward basic and acidic residues; the sequence is VNKDQCPRERPEE. The Zn(2+) site is built by His52, Cys53, and His54. An HCH Motif; seals regulatory zinc-binding pocket motif is present at residues 52–54; that stretch reads HCH. A helical membrane pass occupies residues 80–100; it reads ICFIFMIAEVVGGHIAGSLAV. The Lumenal, vesicle segment spans residues 101-103; sequence VTD. The chain crosses the membrane as a helical span at residues 104 to 124; that stretch reads AAHLLIDLTSFLLSLFSLWLS. Zn(2+) is bound by residues His106, Asp110, and His137. Over 125–140 the chain is Cytoplasmic; that stretch reads SKPPSKRLTFGWHRAE. A helical transmembrane segment spans residues 141-161; the sequence is ILGALLSILCIWVVTGVLVYL. Residues 162–175 are Lumenal, vesicle-facing; that stretch reads ACERLLYPDYQIQA. Residues 176–196 traverse the membrane as a helical segment; sequence TVMIIVSSCAVAANIVLTVVL. Over 197–217 the chain is Cytoplasmic; the sequence is HQRCLGHNHKEVQANASVRAA. Residues 218 to 238 form a helical membrane-spanning segment; that stretch reads FVHALGDLFQSISVLISALII. His220 and Asp224 together coordinate Zn(2+). The Lumenal, vesicle segment spans residues 239–245; sequence YFKPEYK. A helical transmembrane segment spans residues 246–266; it reads IADPICTFIFSILVLASTITI. The Cytoplasmic segment spans residues 267–369; that stretch reads LKDFSILLME…DCLFCEDPCD (103 aa). Zn(2+) contacts are provided by His301, His318, His345, Glu352, Cys361, and Cys364.

This sequence belongs to the cation diffusion facilitator (CDF) transporter (TC 2.A.4) family. SLC30A subfamily. As to quaternary structure, homodimer. As to expression, in the endocrine pancreas, expressed in insulin-producing beta cells. Expressed at relatively high levels in subcutaneous fat tissue from lean persons; much lower levels in visceral fat, whether from lean or obese individuals, and in subcutaneous fat tissue from obese individuals. Expressed in peripheral blood mononuclear cells, including T-cells and B-cells, with great variation among individuals ranging from negative to strongly positive.

Its subcellular location is the cytoplasmic vesicle. The protein resides in the secretory vesicle membrane. It is found in the cell membrane. The catalysed reaction is Zn(2+)(in) + 2 H(+)(out) = Zn(2+)(out) + 2 H(+)(in). In terms of biological role, proton-coupled zinc ion antiporter mediating the entry of zinc into the lumen of pancreatic beta cell secretory granules, thereby regulating insulin secretion. This is Proton-coupled zinc antiporter SLC30A8 from Homo sapiens (Human).